We begin with the raw amino-acid sequence, 886 residues long: DNA mismatch repair protein MutS (886 aa).

626 to 633 lines the ATP pocket; that stretch reads GPNMGGKS.

This sequence belongs to the DNA mismatch repair MutS family.

In terms of biological role, this protein is involved in the repair of mismatches in DNA. It is possible that it carries out the mismatch recognition step. This protein has a weak ATPase activity. This is DNA mismatch repair protein MutS from Burkholderia ambifaria (strain ATCC BAA-244 / DSM 16087 / CCUG 44356 / LMG 19182 / AMMD) (Burkholderia cepacia (strain AMMD)).